Reading from the N-terminus, the 511-residue chain is Cobyric acid synthase (511 aa).

The GATase cobBQ-type domain occupies 251 to 443 (LLDIAIICLP…IHGIFDNDVF (193 aa)). The active-site Nucleophile is the C332. The active site involves H435.

It belongs to the CobB/CobQ family. CobQ subfamily.

Its pathway is cofactor biosynthesis; adenosylcobalamin biosynthesis. Functionally, catalyzes amidations at positions B, D, E, and G on adenosylcobyrinic A,C-diamide. NH(2) groups are provided by glutamine, and one molecule of ATP is hydrogenolyzed for each amidation. The sequence is that of Cobyric acid synthase from Listeria monocytogenes serotype 4b (strain F2365).